The following is a 100-amino-acid chain: DNA-directed RNA polymerase subunit Rpo11 (100 aa).

Belongs to the archaeal Rpo11/eukaryotic RPB11/RPC19 RNA polymerase subunit family. In terms of assembly, part of the RNA polymerase complex.

It is found in the cytoplasm. The enzyme catalyses RNA(n) + a ribonucleoside 5'-triphosphate = RNA(n+1) + diphosphate. Functionally, DNA-dependent RNA polymerase (RNAP) catalyzes the transcription of DNA into RNA using the four ribonucleoside triphosphates as substrates. This Picrophilus torridus (strain ATCC 700027 / DSM 9790 / JCM 10055 / NBRC 100828 / KAW 2/3) protein is DNA-directed RNA polymerase subunit Rpo11.